Consider the following 445-residue polypeptide: Serine/threonine-protein kinase Nek2 (445 aa).

Residues Tyr-8–Ile-271 form the Protein kinase domain. Residues Ile-14 to Cys-22 and Lys-37 each bind ATP. Asp-141 acts as the Proton acceptor in catalysis. Thr-170 carries the phosphothreonine; by autocatalysis modification. Phosphoserine; by autocatalysis is present on Ser-171. Thr-175 and Thr-179 each carry phosphothreonine; by autocatalysis. Ser-184 is subject to Phosphoserine. Ser-241 is modified (phosphoserine; by autocatalysis). The tract at residues Glu-264–Arg-445 is interaction with PCNT. A phosphoserine mark is found at Ser-296 and Ser-300. Positions Pro-301–Arg-445 are interaction with CEP85. Residues Leu-303–Lys-362 adopt a coiled-coil conformation. Positions Leu-306 to Leu-334 are leucine-zipper. The interval Gln-329 to Arg-445 is necessary for interaction with MAD1L1. Positions Glu-333–Pro-370 are required for microtubule binding and for localization to the centrosomes. A phosphoserine; by STK3/MST2 mark is found at Ser-356 and Ser-365. 4 positions are modified to phosphoserine: Ser-387, Ser-390, Ser-397, and Ser-402. Residues Gln-403–Arg-439 are interaction with SAV1 and STK3/MST2. At Ser-406 the chain carries Phosphoserine; by STK3/MST2. The stretch at Ser-406–Ile-430 forms a coiled coil. A Phosphoserine modification is found at Ser-428. Ser-438 carries the post-translational modification Phosphoserine; by STK3/MST2.

It belongs to the protein kinase superfamily. NEK Ser/Thr protein kinase family. NIMA subfamily. In terms of assembly, isoform 1, isoform 2 and isoform 4 form homo- and heterodimers. Interacts with NECAB3 and HMGA2. Isoform 1 interacts with CDC20, CTNB1, MAD1L1, MAPK, NEK11, NPM1, NDC80, PCNT and SGO1. Isoform 1 interacts with STK3/MST2 (via SARAH domain) and SAV1 (via SARAH domain). Isoform 1 and isoform 2 interact with MAD2L1. Isoform 1 and isoform 4 interact with PPP1CA and PPP1CC. Interacts with CEP68; the interaction leads to phosphorylation of CEP68. Interacts with CNTLN; the interaction leads to phosphorylation of CNTLN. Isoform 1 interacts with CEP85. Interacts with CCDC102B; the interaction leads to phosphorylation of CCDC102B. The cofactor is Mg(2+). In terms of processing, activated by autophosphorylation. Protein phosphatase 1 represses autophosphorylation and activation of isoform 1 by dephosphorylation. Phosphorylation by STK3/MST2 is necessary for its localization to the centrosome. Isoform 1 and isoform 2 are expressed in peripheral blood T-cells and a wide variety of transformed cell types. Isoform 1 and isoform 4 are expressed in the testis. Up-regulated in various cancer cell lines, as well as primary breast tumors.

The protein resides in the nucleus. The protein localises to the nucleolus. It is found in the cytoplasm. It localises to the cytoskeleton. Its subcellular location is the microtubule organizing center. The protein resides in the centrosome. The protein localises to the spindle pole. It is found in the chromosome. It localises to the centromere. Its subcellular location is the kinetochore. It catalyses the reaction L-seryl-[protein] + ATP = O-phospho-L-seryl-[protein] + ADP + H(+). It carries out the reaction L-threonyl-[protein] + ATP = O-phospho-L-threonyl-[protein] + ADP + H(+). Its activity is regulated as follows. Isoform 1 is inhibited by ionizing radiation in the presence of PPP1CA. Its catalytic activity is inhibited by the inhibitor CCT241950. In the presence of this inhibitor, displays an autoinhibited conformation: Tyr-70 side chain points into the active site, interacts with the activation loop, and blocks the alphaC helix. Functionally, protein kinase which is involved in the control of centrosome separation and bipolar spindle formation in mitotic cells and chromatin condensation in meiotic cells. Regulates centrosome separation (essential for the formation of bipolar spindles and high-fidelity chromosome separation) by phosphorylating centrosomal proteins such as CROCC, CEP250 and NINL, resulting in their displacement from the centrosomes. Regulates kinetochore microtubule attachment stability in mitosis via phosphorylation of NDC80. Involved in regulation of mitotic checkpoint protein complex via phosphorylation of CDC20 and MAD2L1. Plays an active role in chromatin condensation during the first meiotic division through phosphorylation of HMGA2. Phosphorylates: PPP1CC; SGO1; NECAB3 and NPM1. Essential for localization of MAD2L1 to kinetochore and MAPK1 and NPM1 to the centrosome. Phosphorylates CEP68 and CNTLN directly or indirectly. NEK2-mediated phosphorylation of CEP68 promotes CEP68 dissociation from the centrosome and its degradation at the onset of mitosis. Involved in the regulation of centrosome disjunction. Phosphorylates CCDC102B either directly or indirectly which causes CCDC102B to dissociate from the centrosome and allows for centrosome separation. Phosphorylates and activates NEK11 in G1/S-arrested cells. Its function is as follows. Not present in the nucleolus and, in contrast to isoform 1, does not phosphorylate and activate NEK11 in G1/S-arrested cells. This is Serine/threonine-protein kinase Nek2 (NEK2) from Homo sapiens (Human).